The primary structure comprises 830 residues: Cadherin-16 (830 aa).

Positions 1–21 (MISARPWLLYLSVIQAFTTEA) are cleaved as a signal peptide. At 22–788 (QPAESLHTEV…MKGMPTKLSA (767 aa)) the chain is on the extracellular side. Cadherin domains follow at residues 27 to 128 (LHTE…VPQF), 133 to 237 (YRAQ…SIVE), 244 to 338 (EPVH…APVC), 343 to 451 (PTVN…APEF), 457 to 566 (GPVT…PLKL), and 571 to 667 (YETS…VPAL). N-linked (GlcNAc...) asparagine glycans are attached at residues Asn519, Asn604, and Asn724. Residues 668–788 (TLSAGPSRHL…MKGMPTKLSA (121 aa)) are ectodomain G. A helical membrane pass occupies residues 789–809 (VGVLLGTLAAIGFILILVFTH). The Cytoplasmic portion of the chain corresponds to 810-830 (LALARKDLDQPADSVPLKAAV). Residue Ser823 is modified to Phosphoserine.

Kidney specific.

The protein localises to the cell membrane. Cadherins are calcium-dependent cell adhesion proteins. They preferentially interact with themselves in a homophilic manner in connecting cells; cadherins may thus contribute to the sorting of heterogeneous cell types. The protein is Cadherin-16 (Cdh16) of Mus musculus (Mouse).